Here is a 126-residue protein sequence, read N- to C-terminus: SPbeta prophage-derived uncharacterized protein YorC (126 aa).

The polypeptide is SPbeta prophage-derived uncharacterized protein YorC (yorC) (Bacillus subtilis (strain 168)).